The primary structure comprises 314 residues: Ribosomal RNA small subunit methyltransferase H (314 aa).

S-adenosyl-L-methionine is bound by residues Gly-35–His-37, Asp-55, Phe-79, Asp-101, and Gln-108.

This sequence belongs to the methyltransferase superfamily. RsmH family.

The protein resides in the cytoplasm. The enzyme catalyses cytidine(1402) in 16S rRNA + S-adenosyl-L-methionine = N(4)-methylcytidine(1402) in 16S rRNA + S-adenosyl-L-homocysteine + H(+). Its function is as follows. Specifically methylates the N4 position of cytidine in position 1402 (C1402) of 16S rRNA. The polypeptide is Ribosomal RNA small subunit methyltransferase H (Pectobacterium carotovorum subsp. carotovorum (strain PC1)).